A 118-amino-acid polypeptide reads, in one-letter code: DNA-binding protein Msm_0708 (118 aa).

A disordered region spans residues 16–39 (EARQAAAQGQMQQQAQQQMQQQEA). Over residues 18-39 (RQAAAQGQMQQQAQQQMQQQEA) the composition is skewed to low complexity.

This sequence belongs to the PDCD5 family.

The protein is DNA-binding protein Msm_0708 of Methanobrevibacter smithii (strain ATCC 35061 / DSM 861 / OCM 144 / PS).